Here is a 122-residue protein sequence, read N- to C-terminus: Small ribosomal subunit protein uS13 (122 aa).

The interval 95–122 (GLPVRGQRTHTNARTRKGPAKPIAGKKK) is disordered.

Belongs to the universal ribosomal protein uS13 family. As to quaternary structure, part of the 30S ribosomal subunit. Forms a loose heterodimer with protein S19. Forms two bridges to the 50S subunit in the 70S ribosome.

Functionally, located at the top of the head of the 30S subunit, it contacts several helices of the 16S rRNA. In the 70S ribosome it contacts the 23S rRNA (bridge B1a) and protein L5 of the 50S subunit (bridge B1b), connecting the 2 subunits; these bridges are implicated in subunit movement. Contacts the tRNAs in the A and P-sites. This is Small ribosomal subunit protein uS13 from Xanthobacter autotrophicus (strain ATCC BAA-1158 / Py2).